A 318-amino-acid chain; its full sequence is Transaldolase (318 aa).

The active-site Schiff-base intermediate with substrate is Lys132.

The protein belongs to the transaldolase family. Type 1 subfamily. In terms of assembly, homodimer.

Its subcellular location is the cytoplasm. The enzyme catalyses D-sedoheptulose 7-phosphate + D-glyceraldehyde 3-phosphate = D-erythrose 4-phosphate + beta-D-fructose 6-phosphate. The protein operates within carbohydrate degradation; pentose phosphate pathway; D-glyceraldehyde 3-phosphate and beta-D-fructose 6-phosphate from D-ribose 5-phosphate and D-xylulose 5-phosphate (non-oxidative stage): step 2/3. In terms of biological role, transaldolase is important for the balance of metabolites in the pentose-phosphate pathway. This Shewanella baltica (strain OS195) protein is Transaldolase.